A 205-amino-acid chain; its full sequence is Transcriptional regulator GfcR (205 aa).

It belongs to the purine/pyrimidine phosphoribosyltransferase family. GfcR subfamily.

The chain is Transcriptional regulator GfcR from Methanococcus vannielii (strain ATCC 35089 / DSM 1224 / JCM 13029 / OCM 148 / SB).